The chain runs to 240 residues: Ribonuclease PH (240 aa).

Residues arginine 87 and 125–127 each bind phosphate; that span reads GTR.

The protein belongs to the RNase PH family. In terms of assembly, homohexameric ring arranged as a trimer of dimers.

It catalyses the reaction tRNA(n+1) + phosphate = tRNA(n) + a ribonucleoside 5'-diphosphate. Phosphorolytic 3'-5' exoribonuclease that plays an important role in tRNA 3'-end maturation. Removes nucleotide residues following the 3'-CCA terminus of tRNAs; can also add nucleotides to the ends of RNA molecules by using nucleoside diphosphates as substrates, but this may not be physiologically important. Probably plays a role in initiation of 16S rRNA degradation (leading to ribosome degradation) during starvation. The protein is Ribonuclease PH of Pseudomonas syringae pv. tomato (strain ATCC BAA-871 / DC3000).